The chain runs to 115 residues: Putative septation protein SpoVG (115 aa).

Positions 88-115 (PGTIATSEVSSQLEESDSDKTLSEDLKA) are disordered. The span at 91-100 (IATSEVSSQL) shows a compositional bias: polar residues. Positions 105–115 (SDKTLSEDLKA) are enriched in basic and acidic residues.

It belongs to the SpoVG family.

Functionally, could be involved in septation. The sequence is that of Putative septation protein SpoVG from Macrococcus caseolyticus (strain JCSC5402) (Macrococcoides caseolyticum).